The following is a 573-amino-acid chain: Putative adenine deaminase PTO1085 (573 aa).

Belongs to the metallo-dependent hydrolases superfamily. Adenine deaminase family.

The catalysed reaction is adenine + H2O + H(+) = hypoxanthine + NH4(+). This chain is Putative adenine deaminase PTO1085, found in Picrophilus torridus (strain ATCC 700027 / DSM 9790 / JCM 10055 / NBRC 100828 / KAW 2/3).